A 1004-amino-acid polypeptide reads, in one-letter code: Sodium/potassium-transporting ATPase subunit alpha-B (1004 aa).

2 helical membrane-spanning segments follow: residues 76–96 and 110–126; these read LFGG…LAYG and NLYL…VTGI. Positions 197–216 are disordered; the sequence is SSLTGESEPQARSPEFTNDN. The next 2 membrane-spanning stretches (helical) occupy residues 272-294 and 301-329; these read FIHI…AFVL and AVVF…TLTA. The 4-aspartylphosphate intermediate role is filled by Asp357. Lys489 contacts ATP. Mg(2+) is bound by residues Asp698 and Asp702. The next 4 membrane-spanning stretches (helical) occupy residues 768–791, 828–855, 897–918, and 934–959; these read ISPF…ILCI, ERLI…VIMA, SSCH…LIIS, and ILNF…DKGL.

The protein belongs to the cation transport ATPase (P-type) (TC 3.A.3) family. Type IIC subfamily. As to quaternary structure, the sodium/potassium-transporting ATPase is composed of a catalytic alpha subunit, an auxiliary non-catalytic beta subunit and an additional regulatory subunit.

It localises to the cell membrane. The enzyme catalyses K(+)(out) + Na(+)(in) + ATP + H2O = K(+)(in) + Na(+)(out) + ADP + phosphate + H(+). This is the catalytic component of the active enzyme, which catalyzes the hydrolysis of ATP coupled with the exchange of sodium and potassium ions across the plasma membrane. This action creates the electrochemical gradient of sodium and potassium ions, providing the energy for active transport of various nutrients. This chain is Sodium/potassium-transporting ATPase subunit alpha-B, found in Artemia franciscana (Brine shrimp).